We begin with the raw amino-acid sequence, 409 residues long: N-acetylglucosamine-6-phosphate deacetylase (409 aa).

E143 provides a ligand contact to a divalent metal cation. 154-155 (AH) lines the substrate pocket. Residues H211 and H232 each coordinate a divalent metal cation. Substrate contacts are provided by residues 235–236 (NA), R243, and 269–272 (DGTH). D294 serves as the catalytic Proton donor/acceptor. Substrate is bound at residue 328–330 (LSG).

The protein belongs to the metallo-dependent hydrolases superfamily. NagA family. It depends on a divalent metal cation as a cofactor.

The catalysed reaction is N-acetyl-D-glucosamine 6-phosphate + H2O = D-glucosamine 6-phosphate + acetate. It participates in amino-sugar metabolism; N-acetylneuraminate degradation. Its function is as follows. Hydrolyzes the N-glycolyl group from N-glycolylglucosamine 6-phosphate (GlcNGc-6-P) in the N-glycolylneuraminic acid (Neu5Gc) degradation pathway. Although human is not able to catalyze formation of Neu5Gc due to the inactive CMAHP enzyme, Neu5Gc is present in food and must be degraded. The sequence is that of N-acetylglucosamine-6-phosphate deacetylase (AMDHD2) from Homo sapiens (Human).